The following is a 264-amino-acid chain: Thymidylate synthase (264 aa).

R21 contacts dUMP. H51 lines the (6R)-5,10-methylene-5,6,7,8-tetrahydrofolate pocket. 126–127 (RR) serves as a coordination point for dUMP. C146 serves as the catalytic Nucleophile. Residues 166–169 (RSCD), N177, and 207–209 (HLY) each bind dUMP. D169 serves as a coordination point for (6R)-5,10-methylene-5,6,7,8-tetrahydrofolate. A (6R)-5,10-methylene-5,6,7,8-tetrahydrofolate-binding site is contributed by A263.

This sequence belongs to the thymidylate synthase family. Bacterial-type ThyA subfamily. Homodimer.

It is found in the cytoplasm. The enzyme catalyses dUMP + (6R)-5,10-methylene-5,6,7,8-tetrahydrofolate = 7,8-dihydrofolate + dTMP. It functions in the pathway pyrimidine metabolism; dTTP biosynthesis. Functionally, catalyzes the reductive methylation of 2'-deoxyuridine-5'-monophosphate (dUMP) to 2'-deoxythymidine-5'-monophosphate (dTMP) while utilizing 5,10-methylenetetrahydrofolate (mTHF) as the methyl donor and reductant in the reaction, yielding dihydrofolate (DHF) as a by-product. This enzymatic reaction provides an intracellular de novo source of dTMP, an essential precursor for DNA biosynthesis. This is Thymidylate synthase from Aeromonas hydrophila subsp. hydrophila (strain ATCC 7966 / DSM 30187 / BCRC 13018 / CCUG 14551 / JCM 1027 / KCTC 2358 / NCIMB 9240 / NCTC 8049).